Reading from the N-terminus, the 880-residue chain is Translation initiation factor IF-2 (880 aa).

The tract at residues 259–281 is disordered; sequence KNREEARAVGRSSKSQSKRKSST. One can recognise a tr-type G domain in the interval 379–548; it reads SRAPVVTIMG…LLQAEVLELK (170 aa). The interval 388-395 is G1; sequence GHVDHGKT. Residue 388 to 395 participates in GTP binding; it reads GHVDHGKT. A G2 region spans residues 413 to 417; it reads GITQH. A G3 region spans residues 434 to 437; the sequence is DTPG. GTP contacts are provided by residues 434–438 and 488–491; these read DTPGH and NKID. The G4 stretch occupies residues 488–491; the sequence is NKID. The interval 524–526 is G5; that stretch reads SAK.

It belongs to the TRAFAC class translation factor GTPase superfamily. Classic translation factor GTPase family. IF-2 subfamily.

The protein resides in the cytoplasm. In terms of biological role, one of the essential components for the initiation of protein synthesis. Protects formylmethionyl-tRNA from spontaneous hydrolysis and promotes its binding to the 30S ribosomal subunits. Also involved in the hydrolysis of GTP during the formation of the 70S ribosomal complex. This chain is Translation initiation factor IF-2, found in Baumannia cicadellinicola subsp. Homalodisca coagulata.